Consider the following 185-residue polypeptide: Nuclear transcription factor Y subunit B-3 (185 aa).

Residues 1-36 (MADGPGSPGGGGGSHESGSPRGGGGGGGGGGGGGGV) show a composition bias toward gly residues. A disordered region spans residues 1-39 (MADGPGSPGGGGGSHESGSPRGGGGGGGGGGGGGGVREQ). A DNA-binding region spans residues 43–49 (LPIANIS). Residues 70-81 (VQECVSEFISFI) form a subunit association domain (SAD) region. The interval 145–164 (KDVLGSHGGSSSSAQGMGQQ) is disordered. The span at 153 to 164 (GSSSSAQGMGQQ) shows a compositional bias: low complexity.

It belongs to the NFYB/HAP3 subunit family. As to quaternary structure, heterotrimeric transcription factor composed of three components, NF-YA, NF-YB and NF-YC. NF-YB and NF-YC must interact and dimerize for NF-YA association and DNA binding. Ubiquitous.

It is found in the nucleus. Functionally, component of the NF-Y/HAP transcription factor complex. The NF-Y complex stimulates the transcription of various genes by recognizing and binding to a CCAAT motif in promoters. May regulate the expression of photosynthetic genes, and may be involved in chloroplast and amyloplast development. The sequence is that of Nuclear transcription factor Y subunit B-3 (NFYB3) from Oryza sativa subsp. japonica (Rice).